The chain runs to 189 residues: Phosphoheptose isomerase (189 aa).

An SIS domain is found at 34-189 (LVEAFRKGNK…CDLVEKALFA (156 aa)). 49–51 (NGG) is a substrate binding site. Zn(2+) is bound by residues H58 and E62. Residues E62, 91-92 (ND), 117-119 (STS), S122, and Q169 each bind substrate. 2 residues coordinate Zn(2+): Q169 and H177.

This sequence belongs to the SIS family. GmhA subfamily. As to quaternary structure, homotetramer. It depends on Zn(2+) as a cofactor.

The protein resides in the cytoplasm. The catalysed reaction is 2 D-sedoheptulose 7-phosphate = D-glycero-alpha-D-manno-heptose 7-phosphate + D-glycero-beta-D-manno-heptose 7-phosphate. The protein operates within carbohydrate biosynthesis; D-glycero-D-manno-heptose 7-phosphate biosynthesis; D-glycero-alpha-D-manno-heptose 7-phosphate and D-glycero-beta-D-manno-heptose 7-phosphate from sedoheptulose 7-phosphate: step 1/1. Functionally, catalyzes the isomerization of sedoheptulose 7-phosphate in D-glycero-D-manno-heptose 7-phosphate. The sequence is that of Phosphoheptose isomerase from Pelobacter propionicus (strain DSM 2379 / NBRC 103807 / OttBd1).